A 245-amino-acid polypeptide reads, in one-letter code: Octanoyltransferase (245 aa).

One can recognise a BPL/LPL catalytic domain in the interval 54 to 238; that stretch reads GEATELVWLL…AFENIFGETR (185 aa). Residues 92 to 99, 167 to 169, and 180 to 182 each bind substrate; these read RGGQLTYH, AIG, and GIA. Residue Cys-198 is the Acyl-thioester intermediate of the active site.

It belongs to the LipB family.

Its subcellular location is the cytoplasm. The catalysed reaction is octanoyl-[ACP] + L-lysyl-[protein] = N(6)-octanoyl-L-lysyl-[protein] + holo-[ACP] + H(+). It participates in protein modification; protein lipoylation via endogenous pathway; protein N(6)-(lipoyl)lysine from octanoyl-[acyl-carrier-protein]: step 1/2. In terms of biological role, catalyzes the transfer of endogenously produced octanoic acid from octanoyl-acyl-carrier-protein onto the lipoyl domains of lipoate-dependent enzymes. Lipoyl-ACP can also act as a substrate although octanoyl-ACP is likely to be the physiological substrate. This is Octanoyltransferase from Rhodopseudomonas palustris (strain ATCC BAA-98 / CGA009).